The sequence spans 148 residues: Aspartate 1-decarboxylase (148 aa).

Serine 25 serves as the catalytic Schiff-base intermediate with substrate; via pyruvic acid. Serine 25 is modified (pyruvic acid (Ser)). Threonine 57 is a binding site for substrate. Tyrosine 58 acts as the Proton donor in catalysis. Residue 73 to 75 (GAA) participates in substrate binding.

This sequence belongs to the PanD family. Heterooctamer of four alpha and four beta subunits. Pyruvate serves as cofactor. Post-translationally, is synthesized initially as an inactive proenzyme, which is activated by self-cleavage at a specific serine bond to produce a beta-subunit with a hydroxyl group at its C-terminus and an alpha-subunit with a pyruvoyl group at its N-terminus.

The protein resides in the cytoplasm. The catalysed reaction is L-aspartate + H(+) = beta-alanine + CO2. It participates in cofactor biosynthesis; (R)-pantothenate biosynthesis; beta-alanine from L-aspartate: step 1/1. Functionally, catalyzes the pyruvoyl-dependent decarboxylation of aspartate to produce beta-alanine. The polypeptide is Aspartate 1-decarboxylase (Rhodococcus jostii (strain RHA1)).